Consider the following 500-residue polypeptide: Zinc finger protein 689 (500 aa).

Positions 1 to 24 (MAPPSAPLLEQAPGEVGPTRRRGR) are disordered. The 72-residue stretch at 29-100 (LKFADVAVYF…AALDPQEYRR (72 aa)) folds into the KRAB domain. The disordered stretch occupies residues 110-144 (TRQKNEEKEVFPPKDVPRKGKRGRKPSKPRLIARQ). Positions 112-127 (QKNEEKEVFPPKDVPR) are enriched in basic and acidic residues. The span at 128–137 (KGKRGRKPSK) shows a compositional bias: basic residues. The segment at 149-171 (PICPDCGCTFPDLPALESHKCAQ) adopts a C2H2-type 1; degenerate zinc-finger fold. C2H2-type zinc fingers lie at residues 177 to 199 (YPCPDCGRRFSYPSLLVSHRRAH), 205 to 227 (YVCDQCGKRFSQRKNLSQHQVIH), 233 to 255 (YHCPDCGRCFRRSRSLANHRTTH), 261 to 283 (HQCPSCGRRFAYPSLLAIHQRTH), 289 to 311 (YTCLECSRRFRQRTALVIHQRIH), 317 to 339 (YPCPDCERRFSSSSRLVSHRRVH), 345 to 367 (YACEHCEARFSQRSTLLQHQLLH), 373 to 395 (YPCPDCGRAFRRSGSLAIHRSTH), 401 to 423 (HACDDCGRRFAYPSLLASHRRVH), and 429 to 451 (YACDLCSKRFAQWSHLAQHQLLH). Lysine 455 participates in a covalent cross-link: Glycyl lysine isopeptide (Lys-Gly) (interchain with G-Cter in SUMO2). A C2H2-type 12 zinc finger spans residues 457 to 482 (FPCLECGRCFRQRWSLAVHKCCPNTH).

Belongs to the krueppel C2H2-type zinc-finger protein family.

The protein resides in the nucleus. Its function is as follows. May be involved in transcriptional regulation. This is Zinc finger protein 689 (Znf689) from Rattus norvegicus (Rat).